Here is a 557-residue protein sequence, read N- to C-terminus: uncharacterized protein (557 aa).

Positions 2–45 (NEDETSILNKKMEKIEVEMAEFERLGAEREKEAVERIVQEENQN) form a coiled coil. Disordered regions lie at residues 39–62 (VQEENQNPEVPSNDDASTDIKSRK), 101–127 (NRTYYKNSQGYRRKPKRDDYNNNRKNF), 356–402 (PSPS…YPSN), and 536–557 (ANATSQPLSNLDTGGSAPYDHI). Composition is skewed to polar residues over residues 101 to 110 (NRTYYKNSQG), 358 to 380 (PSFQEEFPSTSKSPSATPGSSNA), 390 to 400 (DSATYPTSIYP), and 536 to 548 (ANATSQPLSNLDT).

The protein resides in the cytoplasm. It localises to the nucleus. This is an uncharacterized protein from Schizosaccharomyces pombe (strain 972 / ATCC 24843) (Fission yeast).